A 203-amino-acid chain; its full sequence is UPF0637 protein SH1846 (203 aa).

It belongs to the UPF0637 family.

The protein is UPF0637 protein SH1846 of Staphylococcus haemolyticus (strain JCSC1435).